The primary structure comprises 144 residues: Putative lipoprotein MAH_0816 (144 aa).

The N-terminal stretch at 1–24 is a signal peptide; it reads MRWPMQNRTTAVIAVALATTALVA. The N-palmitoyl cysteine moiety is linked to residue Cys-25. The S-diacylglycerol cysteine moiety is linked to residue Cys-25.

It belongs to the mycobacterial 19 kDa antigen family.

The protein localises to the cell membrane. In Mycobacterium avium subsp. hominissuis (strain TH135), this protein is Putative lipoprotein MAH_0816.